Here is a 151-residue protein sequence, read N- to C-terminus: Alpha-latroinsectotoxin-Lh1a (151 aa).

8 ANK repeats span residues 21 to 37, 41 to 52, 56 to 80, 84 to 104, 105 to 116, 117 to 125, 126 to 146, and 147 to 151; these read TDVT…DLNA, ILIRNTNAVINI, VGLT…YLND, NGMT…VDFL, KWTPLHLAILFK, QLVIELLAK, TFFD…AVEK, and YIAAR.

The protein belongs to the cationic peptide 01 (latrotoxin) family. 02 (alpha-latroinsectotoxin) subfamily. As to quaternary structure, homotetramer in membranes. Expressed by the venom gland.

The protein localises to the secreted. It localises to the target cell membrane. Functionally, insecticidal presynaptic neurotoxin that induces massive neurotransmitter release at insect (but not vertebrate) neuromuscular junctions. Native toxin forms cation-permeable pores (with high permeability to calcium) in lipid membranes locust muscle membrane and artificial lipid bilayers. May bind to insect neurexin-1 homolog, insect adhesion G protein-coupled receptor L1 homolog, and insect receptor-type tyrosine-protein phosphatase S homolog, and induces neurotransmitter exocytosis both by forming tetrameric pores in membranes and signaling via G protein-coupled receptor. Oligomerization is a process independent of divalent cations. The toxin forms channels with 0.55-0.58 nm entrance diameter and a relatively small conductance in planar phospholipid membranes. The chain is Alpha-latroinsectotoxin-Lh1a from Latrodectus hasselti (Redback spider).